The following is an 805-amino-acid chain: Kinesin-like protein KIP3 (805 aa).

The Kinesin motor domain occupies 10–438 (SIVVAIRVRP…LKYANRAKEI (429 aa)). Residue 192–199 (GATGCGKT) participates in ATP binding. The stretch at 449-481 (LSRHVGSYLKMITEQKRQIEELREREEKMISLK) forms a coiled coil. A disordered region spans residues 720–805 (NFSQKKVKWT…HQSLLATARK (86 aa)). Over residues 764-773 (MQDTTFNEQG) the composition is skewed to polar residues. The span at 774–783 (PSTPSAPTTA) shows a compositional bias: low complexity. Residues 792–805 (SLLTHQSLLATARK) are compositionally biased toward polar residues.

The protein belongs to the TRAFAC class myosin-kinesin ATPase superfamily. Kinesin family. Kinesin II subfamily.

The protein resides in the cytoplasm. Its subcellular location is the cytoskeleton. In Saccharomyces cerevisiae (strain ATCC 204508 / S288c) (Baker's yeast), this protein is Kinesin-like protein KIP3 (KIP3).